The chain runs to 706 residues: mRNA (2'-O-methyladenosine-N(6)-)-methyltransferase (706 aa).

The tract at residues 1–34 (MANENHGSPREGASLLSHSPGTSSQSQPCSPKPV) is disordered. The span at 16–29 (LSHSPGTSSQSQPC) shows a compositional bias: polar residues. S30 is subject to Phosphoserine. In terms of domain architecture, WW spans 43–77 (ELVHAGWEKCWSRRESRPYYFNRFTNQSLWEMPVL). A disordered region spans residues 88 to 148 (GLNATPLPQD…QSVPSSPSIP (61 aa)). Residues 109 to 113 (KSRKR) carry the Nuclear localization signal motif. S116 carries the post-translational modification Phosphoserine. Over residues 132–147 (IPVTPTSQSVPSSPSI) the composition is skewed to low complexity. At T152 the chain carries Phosphothreonine. 2 residues coordinate substrate: R234 and R264. Residue 552–555 (NPPF) participates in S-adenosyl-L-methionine binding. Residues E557 and 587 to 591 (WREPP) contribute to the substrate site. 613 to 615 (FEH) contributes to the S-adenosyl-L-methionine binding site. The segment at 663 to 706 (TAAYKQSGRSHGSSSSSSSSSSSSEAKDRDSGREQGPSREPHPT) is disordered. Positions 668 to 686 (QSGRSHGSSSSSSSSSSSS) match the Nuclear localization signal motif. Low complexity predominate over residues 675–686 (SSSSSSSSSSSS). Residues 687 to 706 (EAKDRDSGREQGPSREPHPT) are compositionally biased toward basic and acidic residues.

The protein belongs to the CAPAM family. In terms of assembly, interacts with POLR2A; interacts with the phosphorylated C-terminal domain (CTD) of POLR2A.

It is found in the nucleus. It catalyses the reaction a 5'-end (N(7)-methyl 5'-triphosphoguanosine)-(2'-O-methyladenosine) in mRNA + S-adenosyl-L-methionine = a 5'-end (N(7)-methyl 5'-triphosphoguanosine)-(N(6),2'-O-dimethyladenosine) in mRNA + S-adenosyl-L-homocysteine + H(+). Its activity is regulated as follows. Cap-specific adenosine methyltransferase activity is inhibited by zinc. Functionally, cap-specific adenosine methyltransferase that catalyzes formation of N(6),2'-O-dimethyladenosine cap (m6A(m)) by methylating the adenosine at the second transcribed position of capped mRNAs. Recruited to the early elongation complex of RNA polymerase II (RNAPII) via interaction with POLR2A and mediates formation of m6A(m) co-transcriptionally. The chain is mRNA (2'-O-methyladenosine-N(6)-)-methyltransferase from Mus musculus (Mouse).